The chain runs to 466 residues: Cysteine--tRNA ligase (466 aa).

Cys-28 lines the Zn(2+) pocket. Residues 30 to 40 (PTVYNYIHIGN) carry the 'HIGH' region motif. The Zn(2+) site is built by Cys-208, His-233, and Glu-237. The 'KMSKS' region motif lies at 265 to 269 (KMSKS). Lys-268 is a binding site for ATP.

It belongs to the class-I aminoacyl-tRNA synthetase family. Monomer. It depends on Zn(2+) as a cofactor.

It is found in the cytoplasm. The catalysed reaction is tRNA(Cys) + L-cysteine + ATP = L-cysteinyl-tRNA(Cys) + AMP + diphosphate. The chain is Cysteine--tRNA ligase from Staphylococcus aureus (strain MSSA476).